Consider the following 205-residue polypeptide: uncharacterized protein (205 aa).

The first 18 residues, 1 to 18 (MKASLALLSLLTAFTSHS), serve as a signal peptide directing secretion.

This is an uncharacterized protein from Escherichia coli (strain K12).